A 287-amino-acid chain; its full sequence is MIKIGAHMPISKGFDRVPQDTVNIGGNSFQIFPHNARSWSAKLPSDEAATKFKREMKKHGIDWENAFCHSGYLINLASPKDDIWQKSVELLKKEVEICRKLGIRYLNIHPGSHLGTGEEEGIDRIVRGLNEVLNNTEGVVILLENVSQKGGNIGYKLEQLKKIRDLVDQRDRVAITYDTCHGFDSGYDITKKEGVEALLNEIESLFGLERLKMIHLNDSKYPLGAAKDRHERIGSGFIGEEGFAVFFSFKEIQEVPWILETPGGNEEHAEDIKKVFEIIEKFGIEVD.

9 residues coordinate Zn(2+): H69, H109, E144, D178, H181, H215, D228, H230, and E260.

Belongs to the AP endonuclease 2 family. Zn(2+) is required as a cofactor.

The enzyme catalyses Endonucleolytic cleavage to 5'-phosphooligonucleotide end-products.. In terms of biological role, endonuclease IV plays a role in DNA repair. It cleaves phosphodiester bonds at apurinic or apyrimidinic (AP) sites, generating a 3'-hydroxyl group and a 5'-terminal sugar phosphate. The sequence is that of Probable endonuclease 4 from Thermotoga maritima (strain ATCC 43589 / DSM 3109 / JCM 10099 / NBRC 100826 / MSB8).